A 285-amino-acid chain; its full sequence is Acetyl-coenzyme A carboxylase carboxyl transferase subunit beta (285 aa).

A CoA carboxyltransferase N-terminal domain is found at 24–285; the sequence is GLWYKSPTGK…DLIQNQPVRA (262 aa).

Belongs to the AccD/PCCB family. In terms of assembly, acetyl-CoA carboxylase is a heterohexamer composed of biotin carboxyl carrier protein (AccB), biotin carboxylase (AccC) and two subunits each of ACCase subunit alpha (AccA) and ACCase subunit beta (AccD).

It is found in the cytoplasm. The enzyme catalyses N(6)-carboxybiotinyl-L-lysyl-[protein] + acetyl-CoA = N(6)-biotinyl-L-lysyl-[protein] + malonyl-CoA. Its pathway is lipid metabolism; malonyl-CoA biosynthesis; malonyl-CoA from acetyl-CoA: step 1/1. Component of the acetyl coenzyme A carboxylase (ACC) complex. Biotin carboxylase (BC) catalyzes the carboxylation of biotin on its carrier protein (BCCP) and then the CO(2) group is transferred by the transcarboxylase to acetyl-CoA to form malonyl-CoA. The chain is Acetyl-coenzyme A carboxylase carboxyl transferase subunit beta from Christiangramia forsetii (strain DSM 17595 / CGMCC 1.15422 / KT0803) (Gramella forsetii).